A 113-amino-acid chain; its full sequence is Nucleoid-associated protein SAV_4556 (113 aa).

It belongs to the YbaB/EbfC family. Homodimer.

It is found in the cytoplasm. The protein resides in the nucleoid. Binds to DNA and alters its conformation. May be involved in regulation of gene expression, nucleoid organization and DNA protection. In Streptomyces avermitilis (strain ATCC 31267 / DSM 46492 / JCM 5070 / NBRC 14893 / NCIMB 12804 / NRRL 8165 / MA-4680), this protein is Nucleoid-associated protein SAV_4556.